A 380-amino-acid polypeptide reads, in one-letter code: Alanine racemase (380 aa).

The Proton acceptor; specific for D-alanine role is filled by lysine 39. At lysine 39 the chain carries N6-(pyridoxal phosphate)lysine. Position 137 (arginine 137) interacts with substrate. Residue tyrosine 263 is the Proton acceptor; specific for L-alanine of the active site. Residue methionine 310 coordinates substrate.

This sequence belongs to the alanine racemase family. It depends on pyridoxal 5'-phosphate as a cofactor.

It carries out the reaction L-alanine = D-alanine. It participates in amino-acid biosynthesis; D-alanine biosynthesis; D-alanine from L-alanine: step 1/1. Catalyzes the interconversion of L-alanine and D-alanine. May also act on other amino acids. In Macrococcus caseolyticus (strain JCSC5402) (Macrococcoides caseolyticum), this protein is Alanine racemase (alr).